A 152-amino-acid chain; its full sequence is Urease accessory protein UreE (152 aa).

The protein belongs to the UreE family.

Its subcellular location is the cytoplasm. Functionally, involved in urease metallocenter assembly. Binds nickel. Probably functions as a nickel donor during metallocenter assembly. This is Urease accessory protein UreE from Enterobacter sp. (strain 638).